The following is a 407-amino-acid chain: Divalent metal cation transporter MntH (407 aa).

The next 11 helical transmembrane spans lie at 16–36 (LTLL…GNFA), 43–63 (STFG…AMLV), 95–115 (WVQA…GAAV), 119–139 (LLLG…TWGI), 152–172 (FVVG…LVFS), 193–213 (AVYL…IYLH), 239–259 (IAMT…AAAF), 288–308 (LFGL…TLAG), 318–338 (FTIP…VVIA), 346–366 (ILVL…IPLL), and 387–407 (VGRL…VAMI).

Belongs to the NRAMP family.

The protein resides in the cell inner membrane. Functionally, h(+)-stimulated, divalent metal cation uptake system. The sequence is that of Divalent metal cation transporter MntH from Aeromonas hydrophila subsp. hydrophila (strain ATCC 7966 / DSM 30187 / BCRC 13018 / CCUG 14551 / JCM 1027 / KCTC 2358 / NCIMB 9240 / NCTC 8049).